Consider the following 494-residue polypeptide: Cytochrome P450 2G1 (494 aa).

Position 439 (cysteine 439) interacts with heme.

Belongs to the cytochrome P450 family. Heme serves as cofactor. As to expression, olfactory epithelium.

The protein resides in the endoplasmic reticulum membrane. It is found in the microsome membrane. The enzyme catalyses an organic molecule + reduced [NADPH--hemoprotein reductase] + O2 = an alcohol + oxidized [NADPH--hemoprotein reductase] + H2O + H(+). In terms of biological role, cytochromes P450 are a group of heme-thiolate monooxygenases. This isozyme seems to be implicated in olfaction. This is Cytochrome P450 2G1 (Cyp2g1) from Rattus norvegicus (Rat).